We begin with the raw amino-acid sequence, 285 residues long: Glycine--tRNA ligase alpha subunit (285 aa).

It belongs to the class-II aminoacyl-tRNA synthetase family. Tetramer of two alpha and two beta subunits.

It localises to the cytoplasm. The enzyme catalyses tRNA(Gly) + glycine + ATP = glycyl-tRNA(Gly) + AMP + diphosphate. The polypeptide is Glycine--tRNA ligase alpha subunit (Granulibacter bethesdensis (strain ATCC BAA-1260 / CGDNIH1)).